A 241-amino-acid chain; its full sequence is Probable transcriptional regulatory protein Neut_0281 (241 aa).

Belongs to the TACO1 family.

It localises to the cytoplasm. The chain is Probable transcriptional regulatory protein Neut_0281 from Nitrosomonas eutropha (strain DSM 101675 / C91 / Nm57).